Here is a 394-residue protein sequence, read N- to C-terminus: Phosphoglycerate kinase (394 aa).

Substrate contacts are provided by residues 21–23, Arg37, 60–63, Arg119, and Arg152; these read DFN and HLGR. Residues Lys202, Glu324, and 350–353 each bind ATP; that span reads GGDS.

The protein belongs to the phosphoglycerate kinase family. In terms of assembly, monomer.

The protein localises to the cytoplasm. It carries out the reaction (2R)-3-phosphoglycerate + ATP = (2R)-3-phospho-glyceroyl phosphate + ADP. Its pathway is carbohydrate degradation; glycolysis; pyruvate from D-glyceraldehyde 3-phosphate: step 2/5. This Carboxydothermus hydrogenoformans (strain ATCC BAA-161 / DSM 6008 / Z-2901) protein is Phosphoglycerate kinase.